We begin with the raw amino-acid sequence, 319 residues long: Large ribosomal subunit protein uL10 (319 aa).

The segment at 289 to 319 is disordered; that stretch reads EQKSAAPAAKEEAPKEDSEESDEDMGFGLFD.

The protein belongs to the universal ribosomal protein uL10 family. P0 forms a pentameric complex by interaction with dimers of P1 and P2. In terms of processing, phosphorylated.

Its subcellular location is the nucleus. It localises to the cytoplasm. Functionally, ribosomal protein P0 is the functional equivalent of E.coli protein L10. This chain is Large ribosomal subunit protein uL10 (rplp0), found in Danio rerio (Zebrafish).